Here is a 914-residue protein sequence, read N- to C-terminus: Alanine--tRNA ligase (914 aa).

4 residues coordinate Zn(2+): His-613, His-617, Cys-717, and His-721.

It belongs to the class-II aminoacyl-tRNA synthetase family. Zn(2+) serves as cofactor.

Its subcellular location is the cytoplasm. It catalyses the reaction tRNA(Ala) + L-alanine + ATP = L-alanyl-tRNA(Ala) + AMP + diphosphate. Functionally, catalyzes the attachment of alanine to tRNA(Ala) in a two-step reaction: alanine is first activated by ATP to form Ala-AMP and then transferred to the acceptor end of tRNA(Ala). Also edits incorrectly charged Ser-tRNA(Ala) and Gly-tRNA(Ala) via its editing domain. The protein is Alanine--tRNA ligase of Pyrococcus furiosus (strain ATCC 43587 / DSM 3638 / JCM 8422 / Vc1).